Reading from the N-terminus, the 235-residue chain is Ion-translocating oxidoreductase complex subunit E (235 aa).

The next 5 membrane-spanning stretches (helical) occupy residues 63–83 (LGLSLATMLVLTCTNTVISLF), 93–113 (IPIYVMIIATTVTAVQLLMNA), 117–137 (TLYQSLGIFIPLIVTNCIIIG), 152–172 (IWDGFSMGLGMALSLTILGAL), and 206–226 (SFLLFILPPGAFIGLGLLLAI).

The protein belongs to the NqrDE/RnfAE family. The complex is composed of six subunits: RnfA, RnfB, RnfC, RnfD, RnfE and RnfG.

It localises to the cell inner membrane. Part of a membrane-bound complex that couples electron transfer with translocation of ions across the membrane. The polypeptide is Ion-translocating oxidoreductase complex subunit E (Haemophilus influenzae (strain PittEE)).